Here is a 429-residue protein sequence, read N- to C-terminus: MKERTIQPVNNGLNGNITIPGDKSISHRAVMFGAIAEGKTTIKGFLPGADCLSTISCFKEMGVDIVQNGDEVTVVGKGLEGLQEPKAILDVGNSGTTIRLMSGILANTPFFSCVQGDASIAKRPMKRVTNPLKQMGANIDGREEGTFTPLTIRGGDLKAIEYTSPVASAQVKSAILLAGLRAEGVTAVTEPHISRDHTERMLEAFGVKVTREGKTVKLAGGQKLTATDVQVPGDVSSAAFFLVAGAIIPNSKLVLQNVGMNPTRTGIIDVLEKMGATFTVEPINEGASEPAANITIETTSLKGIEIGGDIIPRLIDEIPVIALAATQAEGITVIKDAHELKVKETNRIDTVVAELTKLGARIEATDDGMIIYGKSALKGNTVNSYGDHRIGMMLAIAGCLAEGKTTIEDAEAVGVSYPTFFEELQRLTK.

Positions 23, 24, and 28 each coordinate 3-phosphoshikimate. Phosphoenolpyruvate is bound at residue K23. Residues G95 and R123 each coordinate phosphoenolpyruvate. S168, Q170, D316, and K343 together coordinate 3-phosphoshikimate. Q170 lines the phosphoenolpyruvate pocket. D316 acts as the Proton acceptor in catalysis. Phosphoenolpyruvate contacts are provided by R347 and R389.

The protein belongs to the EPSP synthase family. As to quaternary structure, monomer.

The protein localises to the cytoplasm. The enzyme catalyses 3-phosphoshikimate + phosphoenolpyruvate = 5-O-(1-carboxyvinyl)-3-phosphoshikimate + phosphate. The protein operates within metabolic intermediate biosynthesis; chorismate biosynthesis; chorismate from D-erythrose 4-phosphate and phosphoenolpyruvate: step 6/7. Catalyzes the transfer of the enolpyruvyl moiety of phosphoenolpyruvate (PEP) to the 5-hydroxyl of shikimate-3-phosphate (S3P) to produce enolpyruvyl shikimate-3-phosphate and inorganic phosphate. The polypeptide is 3-phosphoshikimate 1-carboxyvinyltransferase (Bacillus cereus (strain 03BB102)).